The following is a 1013-amino-acid chain: RNA-binding protein 44 (1013 aa).

2 disordered regions span residues 1-25 and 56-94; these read MQAT…FQND and LATE…IFSQ. Over residues 56 to 76 the composition is skewed to basic and acidic residues; sequence LATEERASDKENSIVDQRDLS. The segment covering 78–94 has biased composition (polar residues); the sequence is LSFSENQDSNRGNIFSQ. 5 positions are modified to phosphoserine: serine 365, serine 368, serine 510, serine 681, and serine 688. One can recognise an RRM domain in the interval 792–865; the sequence is FLIHVGGLCP…KSVTVRLVKI (74 aa). A disordered region spans residues 905-925; it reads RAKSRQLESEQDSEFPPLDQG.

In terms of assembly, homodimer. Interacts with TEX14. As to expression, highly expressed in testis. Also expressed in other tissues at lower level.

Its subcellular location is the cytoplasm. Its function is as follows. Component of intercellular bridges during meiosis. Intercellular bridges are evolutionarily conserved structures that connect differentiating germ cells. Not required for fertility. This Mus musculus (Mouse) protein is RNA-binding protein 44 (Rbm44).